The chain runs to 587 residues: Phosphatidylinositol-3-phosphatase SAC1 (587 aa).

Residues 1–520 (MAATAYEHLK…SPLSVPRDWK (520 aa)) are Cytoplasmic-facing. Residues 122-451 (LNHVLSTDGF…ANACAKQYAG (330 aa)) form the SAC domain. Residues 452–587 (TGALKTDFTR…PRLVQKEKID (136 aa)) form an essential for phosphatidylinositol-4-phosphate phosphatase activity region. Lys-456 is modified (N6-acetyllysine). A helical membrane pass occupies residues 521 to 541 (FLALPIIMVVAFSMCIICLLM). At 542–548 (AGDTWTE) the chain is on the lumenal side. The chain crosses the membrane as a helical span at residues 549–569 (TLAYVLFWGVASIGTFFIILY). Over 570-587 (NGKDFVDAPRLVQKEKID) the chain is Cytoplasmic.

In terms of assembly, interacts with TMEM39A. Interacts with SEC23A and SEC24A; this interaction is reduced in the absence of TMEM39A. Interacts with PLEKHA3 and VAPA and/or VAPB to form a ternary complex. In terms of tissue distribution, detected in spleen, lung, liver, skeletal muscle, kidney, testis and in cerebellar Purkinje cells (at protein level). Ubiquitous. Highly expressed in brain, spleen, liver and kidney.

The protein localises to the endoplasmic reticulum membrane. Its subcellular location is the golgi apparatus membrane. It catalyses the reaction a 1,2-diacyl-sn-glycero-3-phospho-(1D-myo-inositol-3-phosphate) + H2O = a 1,2-diacyl-sn-glycero-3-phospho-(1D-myo-inositol) + phosphate. The enzyme catalyses a 1,2-diacyl-sn-glycero-3-phospho-(1D-myo-inositol 4-phosphate) + H2O = a 1,2-diacyl-sn-glycero-3-phospho-(1D-myo-inositol) + phosphate. Its function is as follows. Phosphoinositide phosphatase which catalyzes the hydrolysis of phosphatidylinositol 4-phosphate (PtdIns(4)P), phosphatidylinositol 3-phosphate (PtdIns(3)P) and has low activity towards phosphatidylinositol-3,5-bisphosphate (PtdIns(3,5)P2). Shows a very robust PtdIns(4)P phosphatase activity when it binds PtdIns(4)P in a 'cis' configuration in the cellular environment, with much less activity seen when it binds PtdIns(4)P in 'trans' configuration. PtdIns(4)P phosphatase activity (when it binds PtdIns(4)P in 'trans' configuration) is enhanced in the presence of PLEKHA3. The chain is Phosphatidylinositol-3-phosphatase SAC1 (Sacm1l) from Rattus norvegicus (Rat).